The chain runs to 71 residues: Small ribosomal subunit protein bS21 (71 aa).

The interval 40–71 (KPTQVRKRKQAAAVKRHMKRLNREQQRRQRPY) is disordered. Residues 43-59 (QVRKRKQAAAVKRHMKR) are compositionally biased toward basic residues. Over residues 60 to 71 (LNREQQRRQRPY) the composition is skewed to basic and acidic residues.

It belongs to the bacterial ribosomal protein bS21 family.

The protein is Small ribosomal subunit protein bS21 of Halorhodospira halophila (strain DSM 244 / SL1) (Ectothiorhodospira halophila (strain DSM 244 / SL1)).